We begin with the raw amino-acid sequence, 188 residues long: MEDEKSFSDICGGRLALRCRYYSPYCREFGLSSARLSLCSLTAVTCAVWLAAYGLFTLCENSMVLSATIFITILGLLGYLHFVKIDQETLLIIDSLGIQMTSSYASGKESTTFIEMDKVKDIIINEAIYMQKVIYYLCILLKEPGKPHEISRVVPVFQSAKPRLDCLIEVYRSCQEVLAHQKATATSL.

The protein belongs to the PIGH family. In terms of assembly, component of the glycosylphosphatidylinositol-N-acetylglucosaminyltransferase (GPI-GnT) complex composed at least by PIGA, PIGC, PIGH, PIGP, PIGQ, PIGY and DPM2. Interacts with PIGQ.

Its subcellular location is the cytoplasm. It functions in the pathway glycolipid biosynthesis; glycosylphosphatidylinositol-anchor biosynthesis. Functionally, part of the glycosylphosphatidylinositol-N-acetylglucosaminyltransferase (GPI-GnT) complex that catalyzes the transfer of N-acetylglucosamine from UDP-N-acetylglucosamine to phosphatidylinositol and participates in the first step of GPI biosynthesis. The polypeptide is Phosphatidylinositol N-acetylglucosaminyltransferase subunit H (Mus musculus (Mouse)).